A 508-amino-acid chain; its full sequence is MWRQAKWNEPLIFELNKSGAARQGFLINKDEEIRSQIKEMKIPKNLLRENEPDLPSLSELEVVRHFVRLSQMNFGVDIGIMPLGSCTMKYNPKIEEKATAITEFHHPLEDEDYIQGILEMIYELQNWFSEITGMDECSLQVPAGSAGEFAGVLMIKKYHEEHNRNYKDTILVADTAHGTNPASAAMAGYKVMYVKSNAEGLVDMDILREIVNDKTAGFMLTNPNTLGLFEENILEISKIIHSTNAVLYYDGANLNGVLGIARPGDMGFDIVHLNLHKTFAVPHGGGGPGAGAICAKGELVNYLPYPMVEKVNGKYKLSKIPKNSIGKIATFYGNVGNLARSFAYILGLGPQGIQMIGKMSTLATNYLIAKLRDVKELELIAPNRHRKHEVVFSVKQLMENYGVSANDVAKALLDNGFYAPTIYFPPIVEEALMIEPTETETKETLDMFAETLKKIVNDAKINPEQVMKSPNNTSIARLDQAYANHPSTITPTYRVLRLRRLGKIDYLK.

Lys-277 bears the N6-(pyridoxal phosphate)lysine mark.

Belongs to the GcvP family. C-terminal subunit subfamily. As to quaternary structure, the glycine cleavage system is composed of four proteins: P, T, L and H. In this organism, the P 'protein' is a heterodimer of two subunits. Requires pyridoxal 5'-phosphate as cofactor.

The enzyme catalyses N(6)-[(R)-lipoyl]-L-lysyl-[glycine-cleavage complex H protein] + glycine + H(+) = N(6)-[(R)-S(8)-aminomethyldihydrolipoyl]-L-lysyl-[glycine-cleavage complex H protein] + CO2. Its function is as follows. The glycine cleavage system catalyzes the degradation of glycine. The P protein binds the alpha-amino group of glycine through its pyridoxal phosphate cofactor; CO(2) is released and the remaining methylamine moiety is then transferred to the lipoamide cofactor of the H protein. This Saccharolobus solfataricus (strain ATCC 35092 / DSM 1617 / JCM 11322 / P2) (Sulfolobus solfataricus) protein is Probable glycine dehydrogenase (decarboxylating) subunit 2.